A 215-amino-acid polypeptide reads, in one-letter code: Cytochrome b6 (215 aa).

The helical transmembrane segment at 32-52 threads the bilayer; it reads IFYCLGGITLTCFLVQIATGF. Cys-35 provides a ligand contact to heme c. Heme b contacts are provided by His-86 and His-100. The next 3 membrane-spanning stretches (helical) occupy residues 90 to 110, 116 to 136, and 186 to 206; these read ASMMVLVMILHVFRVYLTGGF, LTWVTGVILAVLTVSFGVTGY, and LHTFVLPLLTAVFMLMHFLMI. His-187 and His-202 together coordinate heme b.

Belongs to the cytochrome b family. PetB subfamily. In terms of assembly, the 4 large subunits of the cytochrome b6-f complex are cytochrome b6, subunit IV (17 kDa polypeptide, PetD), cytochrome f and the Rieske protein, while the 4 small subunits are PetG, PetL, PetM and PetN. The complex functions as a dimer. It depends on heme b as a cofactor. Requires heme c as cofactor.

It is found in the plastid. The protein resides in the chloroplast thylakoid membrane. Component of the cytochrome b6-f complex, which mediates electron transfer between photosystem II (PSII) and photosystem I (PSI), cyclic electron flow around PSI, and state transitions. The sequence is that of Cytochrome b6 from Adiantum capillus-veneris (Maidenhair fern).